The chain runs to 579 residues: Aspartate--tRNA(Asp/Asn) ligase (579 aa).

Residue Glu171 coordinates L-aspartate. Residues 195 to 198 (QLFK) are aspartate. Residue Arg217 coordinates L-aspartate. ATP is bound by residues 217-219 (RDE) and Gln226. L-aspartate is bound at residue His444. Glu475 is an ATP binding site. L-aspartate is bound at residue Arg482. An ATP-binding site is contributed by 527–530 (GLDR).

The protein belongs to the class-II aminoacyl-tRNA synthetase family. Type 1 subfamily. In terms of assembly, homodimer.

It localises to the cytoplasm. The enzyme catalyses tRNA(Asx) + L-aspartate + ATP = L-aspartyl-tRNA(Asx) + AMP + diphosphate. Aspartyl-tRNA synthetase with relaxed tRNA specificity since it is able to aspartylate not only its cognate tRNA(Asp) but also tRNA(Asn). Reaction proceeds in two steps: L-aspartate is first activated by ATP to form Asp-AMP and then transferred to the acceptor end of tRNA(Asp/Asn). In Thermotoga neapolitana (strain ATCC 49049 / DSM 4359 / NBRC 107923 / NS-E), this protein is Aspartate--tRNA(Asp/Asn) ligase.